The sequence spans 41 residues: Large ribosomal subunit protein bL36 (41 aa).

This sequence belongs to the bacterial ribosomal protein bL36 family.

This chain is Large ribosomal subunit protein bL36, found in Brucella abortus (strain S19).